Reading from the N-terminus, the 822-residue chain is Pentatricopeptide repeat-containing protein At2g41720 (822 aa).

Residues 1–28 (MATVTNFKLVTPPESSRADKPGATKASD) form a disordered region. PPR repeat units lie at residues 106-136 (ARKN…MKIQ), 142-176 (RNDI…SCKP), 177-211 (DAET…AIAP), 212-246 (SRST…GVGP), 247-281 (DLVT…KVRP), 282-316 (DTTT…RAEC), 319-353 (DVVT…GLKP), 354-388 (NIVS…GIIP), 389-423 (DVVS…RRKP), 424-458 (NVVT…GIKP), 459-493 (NVVS…GINL), 494-528 (NTAA…KVKA), 529-563 (DSVT…SIPL), 564-598 (TKEV…GCEP), 599-633 (DVIA…GIEP), 634-668 (DSIA…EIPF), 669-699 (TGAV…MDPY), 704-738 (SIGL…GVGI), and 739-773 (NLKT…GIQP).

The protein belongs to the PPR family. P subfamily.

In Arabidopsis thaliana (Mouse-ear cress), this protein is Pentatricopeptide repeat-containing protein At2g41720 (EMB2654).